We begin with the raw amino-acid sequence, 212 residues long: Small ribosomal subunit protein uS3 (212 aa).

In terms of domain architecture, KH type-2 spans 38-106 (IRKFVKKTLY…EFAIEVNEIR (69 aa)).

It belongs to the universal ribosomal protein uS3 family. As to quaternary structure, part of the 30S ribosomal subunit. Forms a tight complex with proteins S10 and S14.

Binds the lower part of the 30S subunit head. Binds mRNA in the 70S ribosome, positioning it for translation. This Nitratidesulfovibrio vulgaris (strain ATCC 29579 / DSM 644 / CCUG 34227 / NCIMB 8303 / VKM B-1760 / Hildenborough) (Desulfovibrio vulgaris) protein is Small ribosomal subunit protein uS3.